Reading from the N-terminus, the 395-residue chain is Phosphoglycerate kinase (395 aa).

Substrate-binding positions include 21-23 (DLN), Arg36, 59-62 (HLGR), Arg113, and Arg146. Residues Lys197, Glu324, and 350–353 (GGDT) each bind ATP.

It belongs to the phosphoglycerate kinase family. As to quaternary structure, monomer.

It is found in the cytoplasm. It catalyses the reaction (2R)-3-phosphoglycerate + ATP = (2R)-3-phospho-glyceroyl phosphate + ADP. Its pathway is carbohydrate degradation; glycolysis; pyruvate from D-glyceraldehyde 3-phosphate: step 2/5. This Acinetobacter baumannii (strain ATCC 17978 / DSM 105126 / CIP 53.77 / LMG 1025 / NCDC KC755 / 5377) protein is Phosphoglycerate kinase.